The sequence spans 333 residues: MRILITGGGTGGHLSVAKSLKEAFKKKDATLYYIGSIQGQDRSWFENDEDFQKKLFFDVEGVVNKKGINKIRALTDIVRASFAAKKLIKNESIDAVVSVGGYSAAAASFAALQLNLPLFIHEQNAVKGKLNRLLSPFAKRVFCSFVPPYDPYPVQNIFYETRRIRKELTTIIFLGGSQGAKQINDLAMSWAKELQKHNIKIIHQTGTRDFERVRSFYAKERIEADVFAFDQNLAQKIVQADFAVSRSGASTLWELATNLLPALYIPYPYAAGDHQKHNALFLYRHDASMVFEGQSPQDILSLNIFSMSENLLPFSRPDGATKIVLSIVKMIEK.

UDP-N-acetyl-alpha-D-glucosamine is bound by residues 10–12 (TGG), asparagine 124, serine 177, and glutamine 275.

The protein belongs to the glycosyltransferase 28 family. MurG subfamily.

The protein localises to the cell inner membrane. It carries out the reaction di-trans,octa-cis-undecaprenyl diphospho-N-acetyl-alpha-D-muramoyl-L-alanyl-D-glutamyl-meso-2,6-diaminopimeloyl-D-alanyl-D-alanine + UDP-N-acetyl-alpha-D-glucosamine = di-trans,octa-cis-undecaprenyl diphospho-[N-acetyl-alpha-D-glucosaminyl-(1-&gt;4)]-N-acetyl-alpha-D-muramoyl-L-alanyl-D-glutamyl-meso-2,6-diaminopimeloyl-D-alanyl-D-alanine + UDP + H(+). It functions in the pathway cell wall biogenesis; peptidoglycan biosynthesis. Functionally, cell wall formation. Catalyzes the transfer of a GlcNAc subunit on undecaprenyl-pyrophosphoryl-MurNAc-pentapeptide (lipid intermediate I) to form undecaprenyl-pyrophosphoryl-MurNAc-(pentapeptide)GlcNAc (lipid intermediate II). The polypeptide is UDP-N-acetylglucosamine--N-acetylmuramyl-(pentapeptide) pyrophosphoryl-undecaprenol N-acetylglucosamine transferase (Nitratiruptor sp. (strain SB155-2)).